Consider the following 283-residue polypeptide: MAEITASLVKELRDRTGAGMMECKKALVEANGDIELAIDNMRKSGQAKAAKKAGRVAAEGVILARVENGFGVLVEMNCETDFVAKDAGFLGLANEVADFAAANKGTTIEALQAQFEEKRAALVAKIGENMNIRRVAYLDGQVIAQYLHGAKIGVLVAGEGSADELKKVAMHVAASKPEFVNPEDVSAEVVEHERQIQIDIAINSGKPKEIAEKMVEGRMKKFTGEVSLTGQAFVMDPSVSVGDFLKSVNTSVSNFIRLEVGEGIEKKEEDFAAEVAKITGGNA.

The involved in Mg(2+) ion dislocation from EF-Tu stretch occupies residues 80-83 (TDFV).

The protein belongs to the EF-Ts family.

It is found in the cytoplasm. Its function is as follows. Associates with the EF-Tu.GDP complex and induces the exchange of GDP to GTP. It remains bound to the aminoacyl-tRNA.EF-Tu.GTP complex up to the GTP hydrolysis stage on the ribosome. This Haemophilus influenzae (strain 86-028NP) protein is Elongation factor Ts.